We begin with the raw amino-acid sequence, 265 residues long: Type 1 encapsulin shell protein (265 aa).

The protein belongs to the encapsulin family. Family 1 subfamily. Found in a complex with DyP, suggesting it is the native cargo protein. Monomers form pentamers, which assemble to form hollow shells composed of 60 subunits with several openings.

Its subcellular location is the encapsulin nanocompartment. It is found in the cell membrane. In terms of biological role, shell component of a type 1 encapsulin nanocompartment. Assembles into proteinaceous shells 23-24 nm in diameter with 2-2.5 nm thick walls. Cargo protein DyP is targeted to the interior via its C-terminal extension; probably only 1 DyP hexamer is incorporated into each shell. Probably involved in protection against oxidative damage. This Mycolicibacterium paratuberculosis (strain ATCC BAA-968 / K-10) (Mycobacterium paratuberculosis) protein is Type 1 encapsulin shell protein.